We begin with the raw amino-acid sequence, 499 residues long: Glucooligosaccharide oxidase (499 aa).

The N-terminal stretch at 1 to 25 (MVRIQELTAALSLASVVQASWIQKR) is a signal peptide. A disulfide bridge links Cys-31 with Cys-80. The 173-residue stretch at 58 to 230 (VDYDPAAIAI…SEFEFNTFEA (173 aa)) folds into the FAD-binding PCMH-type domain. The 6-(S-cysteinyl)-8alpha-(pros-histidyl)-FAD (His-Cys) cross-link spans 95–155 (HSYGSYGFGG…GNRALSHGTC (61 aa)). Substrate contacts are provided by Tyr-97, Thr-154, and Arg-270. Residues Asn-330 and Asn-366 are each glycosylated (N-linked (GlcNAc...) asparagine). Gln-378 and Gln-409 together coordinate substrate. N-linked (GlcNAc...) asparagine glycosylation is present at Asn-419. Tyr-454 contributes to the substrate binding site. The active-site Proton acceptor is the Tyr-454.

This sequence belongs to the oxygen-dependent FAD-linked oxidoreductase family. FAD serves as cofactor. In terms of processing, the FAD cofactor is bound via a bicovalent 6-S-cysteinyl, 8alpha-N1-histidyl FAD linkage.

The protein resides in the secreted. It carries out the reaction beta-lactose + O2 = lactobiono-1,5-lactone + H2O2. The enzyme catalyses D-cellobiose + O2 = D-cellobiono-1,5-lactone + H2O2. It catalyses the reaction D-cellotriose + O2 = D-cellotriono-1,5-lactone + H2O2. The catalysed reaction is D-cellotetraose + O2 = D-cellotetraono-1,5-lactone + H2O2. It carries out the reaction D-cellopentaose + O2 = D-cellopentaono-1,5-lactone + H2O2. The enzyme catalyses D-cellohexaose + O2 = D-cellohexaono-1,5-lactone + H2O2. Its function is as follows. Catalyzes the selective oxidation of C1 hydroxyl moieties on mono- and disaccharides with concomitant reduction of molecular oxygen to hydrogen peroxide. This results in the formation of the corresponding lactones, which typically undergo spontaneous hydrolysis. Glucooligosaccharide oxidase is able to oxidize the monosaccharide D-glucose as well as the disaccharides maltose, cellobiose, and lactose. In addition, it shows high selectivity for cello- and maltooligosaccharides, indicating that glucooligosaccharide oxidase prefers oligosaccharides with a beta-D-glucosyl unit on the reducing end and additional sugar units linked by alpha- or beta-1,4 glucosidic bonds. The sequence is that of Glucooligosaccharide oxidase (gluO) from Sarocladium strictum (Black bundle disease fungus).